A 119-amino-acid polypeptide reads, in one-letter code: MICOS complex subunit MIC13 (119 aa).

The Mitochondrial matrix segment spans residues 1-7 (MVARVWS). Residues 8 to 26 (LMRFLIKGSVAGGAVYLVY) traverse the membrane as a helical segment. The Mitochondrial intermembrane portion of the chain corresponds to 27 to 119 (DQELLGPSDK…GWEYLKEHSK (93 aa)).

This sequence belongs to the MICOS complex subunit Mic13 family. Component of the mitochondrial contact site and cristae organizing system (MICOS) complex, composed of at least MICOS10/MIC10, CHCHD3/MIC19, CHCHD6/MIC25, APOO/MIC26, MICOS13/MIC13, APOOL/MIC27 and IMMT/MIC60. The MICOS complex associates with mitochondrial outer membrane proteins SAMM50, MTX1 and MTX2 (together described as components of the mitochondrial outer membrane sorting assembly machinery (SAM) complex) and DNAJC11, mitochondrial inner membrane protein TMEM11 and with HSPA9. The MICOS and SAM complexes together with DNAJC11 are part of a large protein complex spanning both membranes termed the mitochondrial intermembrane space bridging (MIB) complex.

The protein localises to the mitochondrion inner membrane. In terms of biological role, component of the MICOS complex, a large protein complex of the mitochondrial inner membrane that plays crucial roles in the maintenance of crista junctions, inner membrane architecture, and formation of contact sites to the outer membrane. Constituent of mature MICOS complex, it is required for the formation of cristae junction (CJ) and maintenance of cristae morphology. Required for the incorporation of MICOS10/MIC10 into the MICOS complex. The polypeptide is MICOS complex subunit MIC13 (Micos13) (Mus musculus (Mouse)).